The chain runs to 548 residues: Chaperonin GroEL (548 aa).

Residues 30–33 (TLGP), K51, 87–91 (DGTTT), G415, 479–481 (NAA), and D495 contribute to the ATP site.

Belongs to the chaperonin (HSP60) family. In terms of assembly, forms a cylinder of 14 subunits composed of two heptameric rings stacked back-to-back. Interacts with the co-chaperonin GroES.

It is found in the cytoplasm. It carries out the reaction ATP + H2O + a folded polypeptide = ADP + phosphate + an unfolded polypeptide.. Together with its co-chaperonin GroES, plays an essential role in assisting protein folding. The GroEL-GroES system forms a nano-cage that allows encapsulation of the non-native substrate proteins and provides a physical environment optimized to promote and accelerate protein folding. The sequence is that of Chaperonin GroEL from Klebsiella pneumoniae (strain 342).